Here is a 340-residue protein sequence, read N- to C-terminus: Dihydroorotate dehydrogenase (quinone) (340 aa).

FMN-binding positions include 65 to 69 and threonine 89; that span reads AGADK. Lysine 69 contacts substrate. 114-118 serves as a coordination point for substrate; the sequence is NRNGF. FMN-binding residues include asparagine 142 and asparagine 175. Substrate is bound at residue asparagine 175. The active-site Nucleophile is the serine 178. Substrate is bound at residue asparagine 180. FMN contacts are provided by lysine 220 and threonine 248. Residue 249–250 coordinates substrate; sequence NT. FMN-binding positions include glycine 271, glycine 300, and 321-322; that span reads YS.

It belongs to the dihydroorotate dehydrogenase family. Type 2 subfamily. In terms of assembly, monomer. The cofactor is FMN.

The protein resides in the cell membrane. The enzyme catalyses (S)-dihydroorotate + a quinone = orotate + a quinol. It participates in pyrimidine metabolism; UMP biosynthesis via de novo pathway; orotate from (S)-dihydroorotate (quinone route): step 1/1. Functionally, catalyzes the conversion of dihydroorotate to orotate with quinone as electron acceptor. The polypeptide is Dihydroorotate dehydrogenase (quinone) (Mannheimia succiniciproducens (strain KCTC 0769BP / MBEL55E)).